We begin with the raw amino-acid sequence, 566 residues long: Sorting nexin lst-4 (566 aa).

One can recognise an SH3 domain in the interval 1-61 (MAQVKAEYDF…PESYVTPYQA (61 aa)). The tract at residues 59 to 179 (YQASRPPPVL…DRGSNKVNKN (121 aa)) is disordered. Residues 63–77 (RPPPVLPPPLPPTSS) are compositionally biased toward pro residues. Positions 127–140 (DDFDDEWTDEDDEQ) are enriched in acidic residues. Over residues 143-154 (TRPNVQSSIGSN) the composition is skewed to polar residues. Positions 155–173 (SRRDLSRSHSEHGGPDRGS) are enriched in basic and acidic residues. Residues 227 to 339 (YTCIVDKPKK…HFISCTDEKD (113 aa)) enclose the PX domain. The region spanning 362 to 566 (TVPHQPLDPN…KLTSLAARYD (205 aa)) is the BAR domain.

It belongs to the sorting nexin family. In terms of assembly, homodimer. Isoform d interacts (via SH3 domain) with dyn-1. In terms of tissue distribution, expressed in vulval precursor cells (VPCs) and apoptotic germ cells. Colocalizes with actin, dyn-1 and rab-5 in early phagosomes.

Its subcellular location is the cytoplasm. It is found in the cytoplasmic vesicle. It localises to the phagosome membrane. In terms of biological role, involved in the signaling of vulval development by acting as a negative regulator of epidermal growth factor receptor (EGFR) signaling. Aids in phagosomal membrane tubule formation which is required for phagosomal fusion with endosomes and lysosomes. Also recruits rab-7 to phagosomes by an interaction with dyn-1. These are events leading to phagosome maturation which is a step in apoptotic cell corpse clearance. Binds phosphatidylinositol-3,4,5-trisphosphate. This Caenorhabditis elegans protein is Sorting nexin lst-4.